A 344-amino-acid chain; its full sequence is Phosphoribosylformylglycinamidine cyclo-ligase (344 aa).

It belongs to the AIR synthase family.

The protein localises to the cytoplasm. The enzyme catalyses 2-formamido-N(1)-(5-O-phospho-beta-D-ribosyl)acetamidine + ATP = 5-amino-1-(5-phospho-beta-D-ribosyl)imidazole + ADP + phosphate + H(+). The protein operates within purine metabolism; IMP biosynthesis via de novo pathway; 5-amino-1-(5-phospho-D-ribosyl)imidazole from N(2)-formyl-N(1)-(5-phospho-D-ribosyl)glycinamide: step 2/2. This is Phosphoribosylformylglycinamidine cyclo-ligase from Leptospira interrogans serogroup Icterohaemorrhagiae serovar Lai (strain 56601).